The primary structure comprises 2570 residues: Stabilin-1 (2570 aa).

Residues 1–25 (MAGPRGLLPLCLLAFCLAGFSFVRG) form the signal peptide. Over 26 to 2478 (QVLFKGCDVK…LAPEAPPVAA (2453 aa)) the chain is Extracellular. EGF-like domains follow at residues 110–148 (HECP…SACQ), 156–193 (FGPD…PHCD), 195–229 (ELPV…QGSE), and 232–271 (APNP…MVCL). Cystine bridges form between Cys-112-Cys-126, Cys-120-Cys-136, Cys-138-Cys-147, Cys-160-Cys-171, Cys-164-Cys-181, Cys-183-Cys-192, Cys-199-Cys-210, Cys-204-Cys-217, Cys-236-Cys-247, Cys-241-Cys-257, and Cys-259-Cys-270. An N-linked (GlcNAc...) asparagine glycan is attached at Asn-133. N-linked (GlcNAc...) asparagine glycosylation is found at Asn-286, Asn-312, Asn-413, Asn-606, Asn-673, Asn-712, and Asn-745. FAS1 domains lie at 356-494 (YGHL…TGLR) and 506-641 (KRTI…DGIL). Positions 728–768 (DCTQCPGGFSNPCYGKGNCSDGIQGNGACLCFPDYKGIACH) constitute an EGF-like 5 domain. Cystine bridges form between Cys-732–Cys-746, Cys-740–Cys-756, and Cys-758–Cys-767. Residue Asn-816 is glycosylated (N-linked (GlcNAc...) asparagine). 4 consecutive EGF-like domains span residues 818 to 858 (SMGD…DGFS), 861 to 903 (PSNP…RVCV), 904 to 946 (AIDE…YQCS), and 947 to 986 (PIDP…DGFS). 10 cysteine pairs are disulfide-bonded: Cys-822-Cys-837, Cys-831-Cys-846, Cys-865-Cys-879, Cys-873-Cys-889, Cys-891-Cys-902, Cys-908-Cys-922, Cys-916-Cys-932, Cys-934-Cys-945, Cys-951-Cys-964, and Cys-958-Cys-974. 2 consecutive FAS1 domains span residues 988–1118 (YGDI…SQVL) and 1128–1253 (GQGL…SGVL). N-linked (GlcNAc...) asparagine glycosylation is found at Asn-1087, Asn-1096, Asn-1170, Asn-1178, Asn-1222, and Asn-1274. Positions 1327–1392 (TLCEPCPGGL…CDCAHGLCQE (66 aa)) constitute a Laminin EGF-like 1 domain. Disulfide bonds link Cys-1332/Cys-1346, Cys-1340/Cys-1356, and Cys-1358/Cys-1367. Residue Asn-1378 is glycosylated (N-linked (GlcNAc...) asparagine). Intrachain disulfides connect Cys-1379-Cys-1390, Cys-1383-Cys-1400, Cys-1402-Cys-1411, Cys-1420-Cys-1430, Cys-1424-Cys-1440, Cys-1442-Cys-1453, Cys-1459-Cys-1472, Cys-1466-Cys-1482, Cys-1484-Cys-1495, Cys-1501-Cys-1514, Cys-1508-Cys-1524, Cys-1526-Cys-1538, Cys-1544-Cys-1557, Cys-1551-Cys-1567, and Cys-1569-Cys-1581. EGF-like domains are found at residues 1416-1454 (TSPQ…IFCS), 1455-1496 (EVDP…ELCQ), 1497-1539 (EINS…RTCE), and 1540-1582 (LLDP…LTCR). Residue Asn-1471 is glycosylated (N-linked (GlcNAc...) asparagine). FAS1 domains lie at 1582–1708 (RARV…DRVL) and 1724–1864 (PRRN…DQLL). Residues Asn-1626 and Asn-1727 are each glycosylated (N-linked (GlcNAc...) asparagine). The Laminin EGF-like 2 domain occupies 1966 to 2031 (SECQACPGGP…RCTVHGRCDE (66 aa)). 15 disulfide bridges follow: Cys-1971–Cys-1985, Cys-1979–Cys-1995, Cys-1997–Cys-2006, Cys-2018–Cys-2029, Cys-2023–Cys-2039, Cys-2041–Cys-2050, Cys-2060–Cys-2070, Cys-2064–Cys-2076, Cys-2078–Cys-2089, Cys-2095–Cys-2108, Cys-2102–Cys-2117, Cys-2119–Cys-2130, Cys-2136–Cys-2150, Cys-2144–Cys-2160, and Cys-2162–Cys-2173. 3 consecutive EGF-like domains span residues 2056 to 2090 (LQPV…RVCT), 2091 to 2131 (VADL…WSCR), and 2132 to 2174 (ARNP…LQCL). A glycan (N-linked (GlcNAc...) asparagine) is linked at Asn-2107. The region spanning 2206 to 2301 (RAGVFHLQAT…SERWDAYCFR (96 aa)) is the Link domain. 9 N-linked (GlcNAc...) asparagine glycosylation sites follow: Asn-2222, Asn-2261, Asn-2290, Asn-2334, Asn-2347, Asn-2379, Asn-2393, Asn-2400, and Asn-2424. 2 cysteine pairs are disulfide-bonded: Cys-2230–Cys-2299 and Cys-2254–Cys-2275. Residues 2322-2459 (NGKLLDVLAA…GIIHALASPL (138 aa)) form the FAS1 7 domain. Residues 2479-2499 (GVGAVLAAGALLGLVAGALYL) traverse the membrane as a helical segment. Residues 2500-2570 (RARGKPMGFG…PDTQRILTVK (71 aa)) lie on the Cytoplasmic side of the membrane.

In terms of assembly, interacts with CHID1. As to expression, high levels found in spleen, lymph node, liver and placenta. Also expressed in endothelial cells.

It is found in the membrane. Its function is as follows. Acts as a scavenger receptor for acetylated low density lipoprotein. Binds to both Gram-positive and Gram-negative bacteria and may play a role in defense against bacterial infection. When inhibited in endothelial tube formation assays, there is a marked decrease in cell-cell interactions, suggesting a role in angiogenesis. Involved in the delivery of newly synthesized CHID1/SI-CLP from the biosynthetic compartment to the endosomal/lysosomal system. This chain is Stabilin-1 (STAB1), found in Homo sapiens (Human).